The sequence spans 517 residues: Glutamyl-tRNA(Gln) amidotransferase subunit A, mitochondrial (517 aa).

Active-site charge relay system residues include Lys58 and Ser131. Positions 106-132 are disordered; the sequence is FGMGTHSTHSAHGPVASPAGRSAGGSS. Ser155 (acyl-ester intermediate) is an active-site residue.

It belongs to the amidase family. GatA subfamily. As to quaternary structure, subunit of the heterotrimeric GatCAB amidotransferase (AdT) complex, composed of A, B and C subunits.

Its subcellular location is the mitochondrion. The enzyme catalyses L-glutamyl-tRNA(Gln) + L-glutamine + ATP + H2O = L-glutaminyl-tRNA(Gln) + L-glutamate + ADP + phosphate + H(+). Functionally, allows the formation of correctly charged Gln-tRNA(Gln) through the transamidation of misacylated Glu-tRNA(Gln) in the mitochondria. The reaction takes place in the presence of glutamine and ATP through an activated gamma-phospho-Glu-tRNA(Gln). In Pyricularia oryzae (strain 70-15 / ATCC MYA-4617 / FGSC 8958) (Rice blast fungus), this protein is Glutamyl-tRNA(Gln) amidotransferase subunit A, mitochondrial.